Consider the following 435-residue polypeptide: tRNA(Ile)-lysidine synthase (435 aa).

Residue 23 to 28 (SGGMDS) coordinates ATP.

Belongs to the tRNA(Ile)-lysidine synthase family.

The protein resides in the cytoplasm. It catalyses the reaction cytidine(34) in tRNA(Ile2) + L-lysine + ATP = lysidine(34) in tRNA(Ile2) + AMP + diphosphate + H(+). Ligates lysine onto the cytidine present at position 34 of the AUA codon-specific tRNA(Ile) that contains the anticodon CAU, in an ATP-dependent manner. Cytidine is converted to lysidine, thus changing the amino acid specificity of the tRNA from methionine to isoleucine. This Xanthomonas campestris pv. campestris (strain 8004) protein is tRNA(Ile)-lysidine synthase.